The primary structure comprises 468 residues: 3-isopropylmalate dehydratase large subunit (468 aa).

Cysteine 347, cysteine 407, and cysteine 410 together coordinate [4Fe-4S] cluster.

This sequence belongs to the aconitase/IPM isomerase family. LeuC type 1 subfamily. In terms of assembly, heterodimer of LeuC and LeuD. The cofactor is [4Fe-4S] cluster.

It catalyses the reaction (2R,3S)-3-isopropylmalate = (2S)-2-isopropylmalate. The protein operates within amino-acid biosynthesis; L-leucine biosynthesis; L-leucine from 3-methyl-2-oxobutanoate: step 2/4. In terms of biological role, catalyzes the isomerization between 2-isopropylmalate and 3-isopropylmalate, via the formation of 2-isopropylmaleate. This chain is 3-isopropylmalate dehydratase large subunit, found in Campylobacter jejuni (strain RM1221).